The primary structure comprises 892 residues: Zinc finger protein 473 homolog (892 aa).

The 79-residue stretch at 23 to 101 (ETLKDLAMDF…TKSSPLQSGF (79 aa)) folds into the KRAB domain. Polar residues-rich tracts occupy residues 66–76 (DTSQPSLTSQP) and 84–97 (ATST…SSPL). Disordered stretches follow at residues 66–97 (DTSQ…SSPL) and 134–203 (GDPE…DSVQ). Basic and acidic residues-rich tracts occupy residues 138–156 (SLPR…HQSP) and 190–203 (KESR…DSVQ). C2H2-type zinc fingers lie at residues 209–231 (YKCS…WVLH) and 265–287 (YTCQ…QKIH). The span at 297-308 (SDSNLEGLSRSP) shows a compositional bias: polar residues. The segment at 297–370 (SDSNLEGLSR…HPKPLRHQKT (74 aa)) is disordered. 2 stretches are compositionally biased toward basic and acidic residues: residues 313-323 (GKQRLSKDTDS) and 332-353 (QDQE…ESQP). 8 consecutive C2H2-type zinc fingers follow at residues 377–399 (FRCK…QRAH), 404–426 (YKCA…RKSH), 432–454 (CECQ…QAIH), 460–482 (YKCD…QRIH), 488–510 (HKCS…QRVH), 516–538 (HQCP…RLRH), 544–566 (FGCA…NKIH), and 572–594 (YECK…LSIH). K476 is covalently cross-linked (Glycyl lysine isopeptide (Lys-Gly) (interchain with G-Cter in SUMO2)). K602 participates in a covalent cross-link: Glycyl lysine isopeptide (Lys-Gly) (interchain with G-Cter in SUMO2). The segment at 697-719 (FKCDIYNRAFKQRAHLSKHQLIH) adopts a C2H2-type 11; degenerate zinc-finger fold. 6 C2H2-type zinc fingers span residues 725–747 (FKCN…QKTH), 753–775 (FECS…QKIH), 781–803 (FKCG…QRIH), 809–831 (YVCQ…LRIH), 837–859 (YTCG…ERIH), and 865–887 (YACG…QRIH).

The protein belongs to the krueppel C2H2-type zinc-finger protein family. In terms of assembly, interacts with the SLBP/pre-mRNA complex but not with SLBP alone. Interacts with LSM11 in a U7 snRNP-dependent manner.

Its subcellular location is the nucleus. In terms of biological role, involved in histone 3'-end pre-mRNA processing by associating with U7 snRNP and interacting with SLBP/pre-mRNA complex. Increases histone 3'-end pre-mRNA processing but has no effect on U7 snRNP levels, when overexpressed. Required for cell cycle progression from G1 to S phases. The protein is Zinc finger protein 473 homolog (Znf473) of Mus musculus (Mouse).